Consider the following 151-residue polypeptide: MARLHSGKRGSSGSTRPLRTEVPAWANITAEETEEVIVKMAKEGKQSAMIGLILRDSYGIPDVKLVTGKSVAQIMKDNNVYPEIPEDLFNLMKKAINLRNHLEENTKDIHSKRGLQLTESKIRRLVKYYRNTKVLPAKWRYSPETARLLVE.

Positions 1–20 are disordered; that stretch reads MARLHSGKRGSSGSTRPLRT.

It belongs to the universal ribosomal protein uS15 family. As to quaternary structure, part of the 30S ribosomal subunit.

This chain is Small ribosomal subunit protein uS15, found in Methanococcus aeolicus (strain ATCC BAA-1280 / DSM 17508 / OCM 812 / Nankai-3).